The chain runs to 208 residues: Ribosomal RNA large subunit methyltransferase E (208 aa).

G62, W64, D82, D98, and D123 together coordinate S-adenosyl-L-methionine. The active-site Proton acceptor is K163.

It belongs to the class I-like SAM-binding methyltransferase superfamily. RNA methyltransferase RlmE family.

Its subcellular location is the cytoplasm. The catalysed reaction is uridine(2552) in 23S rRNA + S-adenosyl-L-methionine = 2'-O-methyluridine(2552) in 23S rRNA + S-adenosyl-L-homocysteine + H(+). In terms of biological role, specifically methylates the uridine in position 2552 of 23S rRNA at the 2'-O position of the ribose in the fully assembled 50S ribosomal subunit. The protein is Ribosomal RNA large subunit methyltransferase E of Mannheimia succiniciproducens (strain KCTC 0769BP / MBEL55E).